The sequence spans 57 residues: Lantibiotic nisin-A (57 aa).

Residues Met-1–Arg-23 constitute a propeptide that is removed on maturation. Thr-25 is subject to (Z)-2,3-didehydrobutyrine. The lanthionine (Ser-Cys) cross-link spans Ser-26–Cys-30. Ser-28 bears the 2,3-didehydroalanine (Ser) mark. 4 consecutive cross-links (beta-methyllanthionine (Thr-Cys)) follow at residues Thr-31–Cys-34, Thr-36–Cys-42, Thr-46–Cys-49, and Thr-48–Cys-51. 2,3-didehydroalanine (Ser) is present on Ser-56.

Belongs to the type A lantibiotic family. Post-translationally, maturation of lantibiotics involves the enzymatic conversion of Thr, and Ser into dehydrated AA and the formation of thioether bonds with cysteine. This is followed by membrane translocation and cleavage of the modified precursor. In terms of processing, the structure of the 2,3-didehydrobutyrine is not discussed in PubMed:8454055. However, in Fig. 1 the residue is diagrammed as the Z-isomer.

Its function is as follows. Lanthionine-containing peptide antibiotic (lantibiotic) active on Gram-positive bacteria. The bactericidal activity of lantibiotics is based on depolarization of energized bacterial cytoplasmic membranes, initiated by the formation of aqueous transmembrane pores. The sequence is that of Lantibiotic nisin-A (spaN) from Lactococcus lactis subsp. lactis (Streptococcus lactis).